A 488-amino-acid chain; its full sequence is Argininosuccinate lyase (488 aa).

It belongs to the lyase 1 family. Argininosuccinate lyase subfamily.

It localises to the cytoplasm. The catalysed reaction is 2-(N(omega)-L-arginino)succinate = fumarate + L-arginine. Its pathway is amino-acid biosynthesis; L-arginine biosynthesis; L-arginine from L-ornithine and carbamoyl phosphate: step 3/3. This chain is Argininosuccinate lyase, found in Corynebacterium jeikeium (strain K411).